Reading from the N-terminus, the 524-residue chain is Leucine-rich repeat-containing protein 1 (524 aa).

LRR repeat units lie at residues 11 to 34 (NRHV…IYRY), 35 to 58 (ARSL…FFQL), 60 to 81 (KLRK…IANF), 83 to 105 (QLVE…AFCK), 107 to 126 (LQVA…SFPE), 127 to 149 (LQNL…NIGN), 150 to 172 (LYNL…SLTQ), 173 to 196 (LRRL…IGAL), 198 to 218 (HLKD…EIGN), 219 to 242 (LKNL…ISGL), 244 to 264 (SLTY…GIGK), 265 to 288 (LKKL…IGDC), 290 to 310 (NLTE…SIGK), 311 to 334 (LKKL…IGGC), 336 to 356 (SLTM…EVSQ), 357 to 380 (AVEL…LTTL), and 382 to 405 (LKAL…IDRA). Positions 456 to 512 (SAIRFLEDEKDEDENETRTLQRRATPHPGELKNMKKTVENLRNDMNAAKGLDSNKNE) form a coiled coil. The disordered stretch occupies residues 464–485 (EKDEDENETRTLQRRATPHPGE). The residue at position 480 (Thr-480) is a Phosphothreonine.

In terms of assembly, interacts with DLG1. May form a complex with DLG1 and ERBIN, where interaction between LRRC1 and ERBIN is indirect.

It localises to the cytoplasm. The protein resides in the membrane. This Mus musculus (Mouse) protein is Leucine-rich repeat-containing protein 1 (Lrrc1).